Here is a 235-residue protein sequence, read N- to C-terminus: Homeobox protein Nkx-2.8 (235 aa).

Residues 51 to 67 (SDESGLETSPADSSQLA) show a composition bias toward polar residues. The disordered stretch occupies residues 51 to 86 (SDESGLETSPADSSQLASLRRESPGSDPEKRRKRRV). Residues 69 to 80 (LRRESPGSDPEK) are compositionally biased toward basic and acidic residues. Positions 81 to 140 (RRKRRVLFSKAQTLELERRFRQQRYLSAPEREQLARLLRLTPTQVKIWFQNHRYKLKRGR) form a DNA-binding region, homeobox.

This sequence belongs to the NK-2 homeobox family. In terms of tissue distribution, prominent expression in ventral brain and neural tube structures.

The protein resides in the nucleus. Possible role in the specification of a distinct subset of neurons. This chain is Homeobox protein Nkx-2.8 (Nkx2-8), found in Mus musculus (Mouse).